A 272-amino-acid polypeptide reads, in one-letter code: Putative UTP--glucose-1-phosphate uridylyltransferase (272 aa).

It belongs to the UDPGP type 2 family.

It carries out the reaction alpha-D-glucose 1-phosphate + UTP + H(+) = UDP-alpha-D-glucose + diphosphate. The sequence is that of Putative UTP--glucose-1-phosphate uridylyltransferase (ytdA) from Bacillus subtilis (strain 168).